A 350-amino-acid chain; its full sequence is Holliday junction branch migration complex subunit RuvB (350 aa).

The large ATPase domain (RuvB-L) stretch occupies residues 4-184; the sequence is ADRIVTASSR…FGIVQRLEFY (181 aa). ATP is bound by residues Ile-23, Arg-24, Gly-65, Lys-68, Thr-69, Thr-70, 131–133, Arg-174, Tyr-184, and Arg-221; that span reads EDF. Residue Thr-69 coordinates Mg(2+). The small ATPAse domain (RuvB-S) stretch occupies residues 185–255; that stretch reads STEDLATIVR…IADLALNMLD (71 aa). The segment at 258–350 is head domain (RuvB-H); sequence ERGFDHQDRR…TPDLFEGDIV (93 aa). Positions 294, 313, and 318 each coordinate DNA.

The protein belongs to the RuvB family. Homohexamer. Forms an RuvA(8)-RuvB(12)-Holliday junction (HJ) complex. HJ DNA is sandwiched between 2 RuvA tetramers; dsDNA enters through RuvA and exits via RuvB. An RuvB hexamer assembles on each DNA strand where it exits the tetramer. Each RuvB hexamer is contacted by two RuvA subunits (via domain III) on 2 adjacent RuvB subunits; this complex drives branch migration. In the full resolvosome a probable DNA-RuvA(4)-RuvB(12)-RuvC(2) complex forms which resolves the HJ.

It is found in the cytoplasm. It catalyses the reaction ATP + H2O = ADP + phosphate + H(+). Functionally, the RuvA-RuvB-RuvC complex processes Holliday junction (HJ) DNA during genetic recombination and DNA repair, while the RuvA-RuvB complex plays an important role in the rescue of blocked DNA replication forks via replication fork reversal (RFR). RuvA specifically binds to HJ cruciform DNA, conferring on it an open structure. The RuvB hexamer acts as an ATP-dependent pump, pulling dsDNA into and through the RuvAB complex. RuvB forms 2 homohexamers on either side of HJ DNA bound by 1 or 2 RuvA tetramers; 4 subunits per hexamer contact DNA at a time. Coordinated motions by a converter formed by DNA-disengaged RuvB subunits stimulates ATP hydrolysis and nucleotide exchange. Immobilization of the converter enables RuvB to convert the ATP-contained energy into a lever motion, pulling 2 nucleotides of DNA out of the RuvA tetramer per ATP hydrolyzed, thus driving DNA branch migration. The RuvB motors rotate together with the DNA substrate, which together with the progressing nucleotide cycle form the mechanistic basis for DNA recombination by continuous HJ branch migration. Branch migration allows RuvC to scan DNA until it finds its consensus sequence, where it cleaves and resolves cruciform DNA. The sequence is that of Holliday junction branch migration complex subunit RuvB from Stutzerimonas stutzeri (strain A1501) (Pseudomonas stutzeri).